The chain runs to 495 residues: MKYNDLRDFVSQLEKLGELKRITAEVDPHLEMTEICDRTLRAGGPALLFENPKGYDMPVLANLFGTPKRVALGMGQDDVAALREIGKLLAFLKEPDPPKGFKDAIEKLPLFRQVMRMSPKVLRSAPCQDVVIEKDKVDLYQIPVQHCWPGDAGPLVTWPLVITRGPNKERQNLGIYRQQVIGRNRLIMRWLSHRGGALDYQEFRKANPDKPYPVAVALGADPATILGAVTPVPDTLSEYAFAGLLRGSRTELVNAGLSDLQVPASAEIVLEGFIYPDDMAPEGPFGDHTGYYNEVDQFPVFTVERITHRRDPIYHSTYTGRPPDEPAILGVALNEVFIPILQKQFPEIVDFYLPPEGCSYRLAVVTMKKQYPGHAKRVMMGVWSFLRQFMYTKFVIVTDDDVNARNWEDVIWAITTRMDPARDTTLVENTPIDYLDFASPVSGLGSKMGMDATNKWPGETDREWGTAIAMTDEVKQRVDDIWDSLGIEIPGARPD.

Asparagine 172 contacts Mn(2+). Prenylated FMN is bound by residues 175–177, 189–191, and 194–195; these read IYR, RWL, and RG. Residue glutamate 238 coordinates Mn(2+). Aspartate 287 functions as the Proton donor in the catalytic mechanism.

The protein belongs to the UbiD family. In terms of assembly, homohexamer. Prenylated FMN is required as a cofactor. It depends on Mn(2+) as a cofactor.

The protein resides in the cell membrane. The catalysed reaction is a 4-hydroxy-3-(all-trans-polyprenyl)benzoate + H(+) = a 2-(all-trans-polyprenyl)phenol + CO2. The protein operates within cofactor biosynthesis; ubiquinone biosynthesis. Catalyzes the decarboxylation of 3-octaprenyl-4-hydroxy benzoate to 2-octaprenylphenol, an intermediate step in ubiquinone biosynthesis. This is 3-octaprenyl-4-hydroxybenzoate carboxy-lyase from Marinobacter nauticus (strain ATCC 700491 / DSM 11845 / VT8) (Marinobacter aquaeolei).